Consider the following 127-residue polypeptide: Large ribosomal subunit protein bL17 (127 aa).

It belongs to the bacterial ribosomal protein bL17 family. Part of the 50S ribosomal subunit. Contacts protein L32.

The chain is Large ribosomal subunit protein bL17 from Fervidobacterium nodosum (strain ATCC 35602 / DSM 5306 / Rt17-B1).